Consider the following 478-residue polypeptide: MAPKKKGKKGKAKGTPIVDGLAPEDMSKEQVEEHVSRIREELDREREERNYFQLERDKIHTFWEITRRQLEEKKAELRNKDREMEEAEERHQVEIKVYKQKVKHLLYEHQNNLTEMKAEGTVVMKLAQKEHRIQESVLRKDMRALKVELKEQELASEVVVKNLRLKHTEEITRMRNDFERQVREIEAKYDKKMKMLRDELDLRRKTELHEVEERKNGQIHTLMQRHEEAFTDIKNYYNDITLNNLALINSLKEQMEDMRKKEDHLEREMAEVSGQNKRLADPLQKAREEMSEMQKQLANYERDKQILLCTKARLKVREKELKDLQWEHEVLEQRFTKVQQERDELYRKFTAAIQEVQQKTGFKNLVLERKLQALSAAVEKKEVQFNEVLAASNLDPAALTLVSRKLEDVLESKNSTIKDLQYELAQVCKAHNDLLRTYEAKLLAFGIPLDNVGFKPLETAVIGQTLGQGPAGLVGTPT.

Residues 1-12 show a composition bias toward basic residues; sequence MAPKKKGKKGKA. Positions 1–33 are disordered; that stretch reads MAPKKKGKKGKAKGTPIVDGLAPEDMSKEQVEE. The tract at residues 1-114 is regulates microtubule-binding; it reads MAPKKKGKKG…LLYEHQNNLT (114 aa). The microtubule-binding stretch occupies residues 115–258; sequence EMKAEGTVVM…NSLKEQMEDM (144 aa). Residues 242 to 427 are a coiled coil; sequence LNNLALINSL…KDLQYELAQV (186 aa). The interaction with SMO stretch occupies residues 357–478; sequence QQKTGFKNLV…GPAGLVGTPT (122 aa).

It belongs to the DRC4 family. As to quaternary structure, component of the nexin-dynein regulatory complex (N-DRC). Interacts with microtubules. Interacts with SMO. Interacts (via coiled-coil domains) with RAB3B (in GTP-bound form). Interacts with DRC1. Interacts with DRC7. As to expression, expressed in respiratory epithelial cells (at protein level). Expressed in the heart, skeletal muscle, pancreas, liver, brain, trachea and lung. Weakly or not expressed in placenta and kidney.

The protein localises to the cytoplasm. Its subcellular location is the cytoskeleton. It is found in the cell projection. It localises to the cilium. The protein resides in the flagellum. The protein localises to the cilium axoneme. Its subcellular location is the cilium basal body. It is found in the golgi apparatus. It localises to the flagellum axoneme. Its function is as follows. Component of the nexin-dynein regulatory complex (N-DRC), a key regulator of ciliary/flagellar motility which maintains the alignment and integrity of the distal axoneme and regulates microtubule sliding in motile axonemes. Plays an important role in the assembly of the N-DRC linker. Plays dual roles at both the primary (or non-motile) cilia to regulate hedgehog signaling and in motile cilia to coordinate cilia movement. Required for proper motile cilia functioning. Positively regulates ciliary smoothened (SMO)-dependent Hedgehog (Hh) signaling pathway by facilitating the trafficking of SMO into the cilium and the stimulation of SMO activity in a GRK2-dependent manner. The sequence is that of Dynein regulatory complex subunit 4 (GAS8) from Homo sapiens (Human).